The following is a 1087-amino-acid chain: Exportin-7-A (1087 aa).

The Importin N-terminal domain maps to 30–96 (AEKALVEFTN…RNYVLTYLAT (67 aa)).

This sequence belongs to the exportin family. In terms of tissue distribution, expressed in oocytes (at protein level).

The protein localises to the cytoplasm. Its subcellular location is the nucleus. Mediates the nuclear export of proteins (cargos) with broad substrate specificity. This is Exportin-7-A (xpo7-a) from Xenopus laevis (African clawed frog).